We begin with the raw amino-acid sequence, 606 residues long: Mitogen-activated protein kinase 20 (606 aa).

A Protein kinase domain is found at 25-316 (FKVQEVIGKG…AEEALADPYF (292 aa)). Residues 31-39 (IGKGSYGVV) and lysine 54 each bind ATP. Aspartate 151 serves as the catalytic Proton acceptor. Threonine 187 carries the phosphothreonine modification. The short motif at 187–189 (TDY) is the TXY element. At tyrosine 189 the chain carries Phosphotyrosine. Residue threonine 192 is modified to Phosphothreonine.

It belongs to the protein kinase superfamily. CMGC Ser/Thr protein kinase family. MAP kinase subfamily. Dually phosphorylated on Thr-187 and Tyr-189, which activates the enzyme.

The catalysed reaction is L-seryl-[protein] + ATP = O-phospho-L-seryl-[protein] + ADP + H(+). The enzyme catalyses L-threonyl-[protein] + ATP = O-phospho-L-threonyl-[protein] + ADP + H(+). Activated by threonine and tyrosine phosphorylation. This is Mitogen-activated protein kinase 20 (MPK20) from Arabidopsis thaliana (Mouse-ear cress).